Here is a 133-residue protein sequence, read N- to C-terminus: DNA-binding protein inhibitor ID-2-A (133 aa).

Residues 23 to 75 enclose the bHLH domain; that stretch reads ARSKTPVDDPMSLLYNMNDCYSKLKELVPSIPQNKKVSKMEILQHVIDYILDL. Positions 106-115 match the Nuclear export signal motif; that stretch reads LNTDISILSL.

Heterodimer with other HLH proteins. As to expression, in the embryo, expressed in a range of tissues, with primary expression in the developing pronephros; expressed in the pronephric anlage, and by the swimming tadpole stages expressed robustly in the pronephric tubules and weakly in the pronephric duct. Expressed in the secondary heart field. In the developing nervous system, expressed in the neural crest and in the neural folds during neurula stages, and at stage 20 in the neural tube, ventral mesoderm and mid-hindbrain boundary. By early tailbud stages, expressed in the neural tube, somites and branchial arches. In tadpoles (stage 37/38), expressed in the heart, eye, otic vesicle, somites and branchial arches. Also expressed in migrating muscle cells. Expressed at a low level in limbs, with expression decreasing as limbs develop, but expressed at a high level in blastemas (regenerated limbs), where expression is localized primarily to the blastemal epidermis. Widely expressed in adults with highest expression in the spleen, skin, intestine and brain, and at a much lower level in testis and heart.

It is found in the cytoplasm. Its subcellular location is the nucleus. In terms of biological role, transcriptional regulator (lacking a basic DNA binding domain) which negatively regulates the basic helix-loop-helix (bHLH) transcription factors by forming heterodimers and inhibiting their DNA binding and transcriptional activity. Inhibits the activity of both neurogenic (neurod1/neuroD) and myogenic (myod1/myoD) bHLH factors. May play a role in the regulation of the circadian clock. This is DNA-binding protein inhibitor ID-2-A (id2-a) from Xenopus laevis (African clawed frog).